The sequence spans 213 residues: Orotate phosphoribosyltransferase (213 aa).

Lys26 contributes to the 5-phospho-alpha-D-ribose 1-diphosphate binding site. An orotate-binding site is contributed by 34–35 (FF). 5-phospho-alpha-D-ribose 1-diphosphate-binding positions include 72 to 73 (YK), Arg99, Lys100, Lys103, His105, and 124 to 132 (DDVITAGTA). Thr128 and Arg156 together coordinate orotate.

This sequence belongs to the purine/pyrimidine phosphoribosyltransferase family. PyrE subfamily. Homodimer. The cofactor is Mg(2+).

It carries out the reaction orotidine 5'-phosphate + diphosphate = orotate + 5-phospho-alpha-D-ribose 1-diphosphate. It functions in the pathway pyrimidine metabolism; UMP biosynthesis via de novo pathway; UMP from orotate: step 1/2. Catalyzes the transfer of a ribosyl phosphate group from 5-phosphoribose 1-diphosphate to orotate, leading to the formation of orotidine monophosphate (OMP). The protein is Orotate phosphoribosyltransferase of Escherichia coli O127:H6 (strain E2348/69 / EPEC).